Here is a 711-residue protein sequence, read N- to C-terminus: DNA topoisomerase 3 (711 aa).

The region spanning 2–135 (KSLILAEKPS…IKRLWISSVT (134 aa)) is the Toprim domain. E8 and D104 together coordinate Mg(2+). Residues 152–580 (FQHLYEAALA…EMKAFTQSIV (429 aa)) enclose the Topo IA-type catalytic domain. The interval 186–191 (SLGRVQ) is interaction with DNA. Catalysis depends on Y305, which acts as the O-(5'-phospho-DNA)-tyrosine intermediate. A disordered region spans residues 672 to 699 (KRFKNKSSGKVSKKEMKKYMNNEDSLEN). Residues 683–692 (SKKEMKKYMN) show a composition bias toward basic and acidic residues.

It belongs to the type IA topoisomerase family. The cofactor is Mg(2+).

The catalysed reaction is ATP-independent breakage of single-stranded DNA, followed by passage and rejoining.. Functionally, releases the supercoiling and torsional tension of DNA, which is introduced during the DNA replication and transcription, by transiently cleaving and rejoining one strand of the DNA duplex. Introduces a single-strand break via transesterification at a target site in duplex DNA. The scissile phosphodiester is attacked by the catalytic tyrosine of the enzyme, resulting in the formation of a DNA-(5'-phosphotyrosyl)-enzyme intermediate and the expulsion of a 3'-OH DNA strand. The free DNA strand then undergoes passage around the unbroken strand, thus removing DNA supercoils. Finally, in the religation step, the DNA 3'-OH attacks the covalent intermediate to expel the active-site tyrosine and restore the DNA phosphodiester backbone. The protein is DNA topoisomerase 3 of Staphylococcus haemolyticus (strain JCSC1435).